A 228-amino-acid polypeptide reads, in one-letter code: Ribosomal RNA small subunit methyltransferase G (228 aa).

S-adenosyl-L-methionine contacts are provided by residues Gly70, Leu75, 120–121, and Arg138; that span reads AE. The interval 207–228 is disordered; the sequence is RRGDTRGPNRRVSPRRTGGAPA.

This sequence belongs to the methyltransferase superfamily. RNA methyltransferase RsmG family.

It is found in the cytoplasm. In terms of biological role, specifically methylates the N7 position of guanine in position 518 of 16S rRNA. This is Ribosomal RNA small subunit methyltransferase G from Mycobacterium marinum (strain ATCC BAA-535 / M).